A 78-amino-acid polypeptide reads, in one-letter code: Acyl carrier protein 1 (78 aa).

Residues 2 to 77 (STIEERVKKI…EAIDYIVAHQ (76 aa)) enclose the Carrier domain. Ser-37 bears the O-(pantetheine 4'-phosphoryl)serine mark.

The protein belongs to the acyl carrier protein (ACP) family. In terms of processing, 4'-phosphopantetheine is transferred from CoA to a specific serine of apo-ACP by AcpS. This modification is essential for activity because fatty acids are bound in thioester linkage to the sulfhydryl of the prosthetic group.

Its subcellular location is the cytoplasm. It participates in lipid metabolism; fatty acid biosynthesis. Carrier of the growing fatty acid chain in fatty acid biosynthesis. In Pseudomonas aeruginosa (strain ATCC 15692 / DSM 22644 / CIP 104116 / JCM 14847 / LMG 12228 / 1C / PRS 101 / PAO1), this protein is Acyl carrier protein 1.